The following is a 612-amino-acid chain: Protein cereblon (612 aa).

The segment covering 1–11 (MDDEETAEIED) has biased composition (acidic residues). Disordered stretches follow at residues 1 to 30 (MDDE…GASA), 58 to 133 (MELI…NPHP), and 181 to 211 (QERR…PYDV). A compositionally biased stretch (low complexity) spans 69–81 (AADAPDAAASTGS). A compositionally biased stretch (basic and acidic residues) spans 181–190 (QERRRSRTSE). One can recognise a Lon N-terminal domain in the interval 250-478 (HMLIFLHQHI…IIGSTLKDES (229 aa)). The 110-residue stretch at 477–586 (ESVFYCRYCN…LAGSSVRIGK (110 aa)) folds into the CULT domain. Residues Cys482, Cys485, Cys551, and Cys554 each coordinate Zn(2+).

It belongs to the CRBN family. In terms of assembly, likely a component of a DCX (DDB1-CUL4-X-box) protein ligase complex. May interact with pic/DDB1. In terms of processing, ubiquitinated.

It is found in the nucleus. The protein operates within protein modification; protein ubiquitination. Its function is as follows. Substrate recognition component of a DCX (DDB1-CUL4-X-box) E3 protein ligase complex that mediates the ubiquitination and subsequent proteasomal degradation of target proteins. Has an essential role in mediating growth by negatively regulating insulin signaling. It also has a role in maintaining presynaptic function in the neuromuscular junction synapses of third-instar larvae. This Drosophila willistoni (Fruit fly) protein is Protein cereblon.